A 488-amino-acid polypeptide reads, in one-letter code: Patatin-like protein 7 (488 aa).

The disordered stretch occupies residues 23-49 (QRGGDGATAASKSANDYNNNDSLLTDM). Residues 32–47 (ASKSANDYNNNDSLLT) are compositionally biased toward polar residues. The 201-residue stretch at 101–301 (LSIDGGGMRG…AMSNPTAAAI (201 aa)) folds into the PNPLA domain. Positions 105–110 (GGGMRG) match the GXGXXG motif. The Nucleophile role is filled by S145.

The protein belongs to the patatin family. Highly expressed in roots and at lower levels in leaves, stems, flowers and siliques.

Its subcellular location is the cell membrane. Functionally, possesses non-specific lipolytic acyl hydrolase (LAH) activity. Catalyzes the hydrolysis of the galactolipids monogalactosyldiacylglycerol (MGDG) and digalactosyldiacylglycerol (DGDG), and the phoshpolipids phosphatidylcholine (PC), phosphatidylethanolamine (PE), phosphatidylglycerol (PG), phosphatidic acid (PA), phosphatidylserine (PS). Favors the release of fatty acid at the sn-2 position for PC. Possesses acyl-CoA thioesterase activity. Negatively affects disease resistance to the necrotic fungal pathogen Botrytis cinerea and the avirulent bacteria Pseudomonas syringae by promoting cell death and reducing the efficiency of the hypersensitive response, respectively. However, PLP2 contributes to resistance to cucumber mosaic virus (CMV), an obligate parasite inducing hypersensitive response. May negatively regulate oxylipin production, possibly via participating in membrane repair that includes removal of oxidatively modified lipids. Enzymatic products of PLP2 may influence cellulose content and cell elongation. This chain is Patatin-like protein 7 (PLP7), found in Arabidopsis thaliana (Mouse-ear cress).